The sequence spans 380 residues: Cytochrome b (380 aa).

Transmembrane regions (helical) follow at residues 34 to 54 (FGSLLAMCLATQILTGLLLAM), 78 to 99 (WLIRNLHANGASFFFICIFLHI), 114 to 134 (WNTGVVLLLTLMATAFVGYVL), and 179 to 199 (FFALHFLLPFMIAGITITHLM). Heme b-binding residues include His-84 and His-98. 2 residues coordinate heme b: His-183 and His-197. An a ubiquinone-binding site is contributed by His-202. The next 4 helical transmembrane spans lie at 227–247 (LKDILGLTLMLTPLLTLALFS), 289–309 (LGGVLALAASVLILLLIPFLH), 321–341 (LSQTLFWLLVANLLVLTWVGS), and 348–368 (FIIIGQMASFSYFTILLILFP).

Belongs to the cytochrome b family. In terms of assembly, the cytochrome bc1 complex contains 11 subunits: 3 respiratory subunits (MT-CYB, CYC1 and UQCRFS1), 2 core proteins (UQCRC1 and UQCRC2) and 6 low-molecular weight proteins (UQCRH/QCR6, UQCRB/QCR7, UQCRQ/QCR8, UQCR10/QCR9, UQCR11/QCR10 and a cleavage product of UQCRFS1). This cytochrome bc1 complex then forms a dimer. Requires heme b as cofactor.

The protein localises to the mitochondrion inner membrane. In terms of biological role, component of the ubiquinol-cytochrome c reductase complex (complex III or cytochrome b-c1 complex) that is part of the mitochondrial respiratory chain. The b-c1 complex mediates electron transfer from ubiquinol to cytochrome c. Contributes to the generation of a proton gradient across the mitochondrial membrane that is then used for ATP synthesis. The chain is Cytochrome b (MT-CYB) from Tragopan satyra (Satyr tragopan).